A 642-amino-acid chain; its full sequence is Threonine--tRNA ligase (642 aa).

In terms of domain architecture, TGS spans M1–T65. The tract at residues D248 to P541 is catalytic. Residues C342, H393, and H518 each contribute to the Zn(2+) site.

This sequence belongs to the class-II aminoacyl-tRNA synthetase family. As to quaternary structure, homodimer. The cofactor is Zn(2+).

It is found in the cytoplasm. The catalysed reaction is tRNA(Thr) + L-threonine + ATP = L-threonyl-tRNA(Thr) + AMP + diphosphate + H(+). Its function is as follows. Catalyzes the attachment of threonine to tRNA(Thr) in a two-step reaction: L-threonine is first activated by ATP to form Thr-AMP and then transferred to the acceptor end of tRNA(Thr). Also edits incorrectly charged L-seryl-tRNA(Thr). In Myxococcus xanthus (strain DK1622), this protein is Threonine--tRNA ligase.